The chain runs to 252 residues: Imidazole glycerol phosphate synthase subunit HisF (252 aa).

Catalysis depends on residues D11 and D130.

It belongs to the HisA/HisF family. In terms of assembly, heterodimer of HisH and HisF.

The protein localises to the cytoplasm. It carries out the reaction 5-[(5-phospho-1-deoxy-D-ribulos-1-ylimino)methylamino]-1-(5-phospho-beta-D-ribosyl)imidazole-4-carboxamide + L-glutamine = D-erythro-1-(imidazol-4-yl)glycerol 3-phosphate + 5-amino-1-(5-phospho-beta-D-ribosyl)imidazole-4-carboxamide + L-glutamate + H(+). It participates in amino-acid biosynthesis; L-histidine biosynthesis; L-histidine from 5-phospho-alpha-D-ribose 1-diphosphate: step 5/9. IGPS catalyzes the conversion of PRFAR and glutamine to IGP, AICAR and glutamate. The HisF subunit catalyzes the cyclization activity that produces IGP and AICAR from PRFAR using the ammonia provided by the HisH subunit. The protein is Imidazole glycerol phosphate synthase subunit HisF of Streptococcus sanguinis (strain SK36).